The primary structure comprises 1167 residues: Rhoptry neck protein 2-like protein 2 (1167 aa).

The signal sequence occupies residues 1–20; that stretch reads MSSNLAFLSLSLAESTASLG. Residues 21-977 are Cytoplasmic-facing; sequence KSLEETRTRL…WVAKRSRSRK (957 aa). The disordered stretch occupies residues 55–94; sequence GPGLSVEGKQTEQMSRKSAEDTRASSLSSDPDDGRAAQLA. A compositionally biased stretch (basic and acidic residues) spans 68 to 77; the sequence is MSRKSAEDTR. A helical transmembrane segment spans residues 978–998; the sequence is LAIVSVLSLGLIFAYTLLSAL. The Extracellular portion of the chain corresponds to 999–1167; that stretch reads DIAQFLTDSG…TPQRAQDGSR (169 aa). Cysteines 1015 and 1026 form a disulfide.

Belongs to the apicomplexan parasites RON2 family.

It is found in the secreted. It localises to the host cell membrane. In terms of biological role, may play a role in host cell invasion. This chain is Rhoptry neck protein 2-like protein 2 (RON2L2), found in Toxoplasma gondii (strain ATCC 50611 / Me49).